The following is a 269-amino-acid chain: Hydroxyethylthiazole kinase (269 aa).

A substrate-binding site is contributed by methionine 45. Residues arginine 121 and threonine 167 each coordinate ATP. Position 194 (glycine 194) interacts with substrate.

This sequence belongs to the Thz kinase family. Mg(2+) is required as a cofactor.

The enzyme catalyses 5-(2-hydroxyethyl)-4-methylthiazole + ATP = 4-methyl-5-(2-phosphooxyethyl)-thiazole + ADP + H(+). Its pathway is cofactor biosynthesis; thiamine diphosphate biosynthesis; 4-methyl-5-(2-phosphoethyl)-thiazole from 5-(2-hydroxyethyl)-4-methylthiazole: step 1/1. Catalyzes the phosphorylation of the hydroxyl group of 4-methyl-5-beta-hydroxyethylthiazole (THZ). The polypeptide is Hydroxyethylthiazole kinase (Bacillus cytotoxicus (strain DSM 22905 / CIP 110041 / 391-98 / NVH 391-98)).